The chain runs to 159 residues: MSRKKRIYKKNTNILQEPVFNDNVLLKFINCLMFDGKKSVAEKLVYNSFREIRKETSVDPIIVFNDAIRNTTPVVQVKSIRIAGSNYQVPMEIPTHRQIMLAIKWIIESARKRTEKTMVERLSKELIDAYKNSGKAIDKKISMHKMAESNRAYAHYRWQ.

Belongs to the universal ribosomal protein uS7 family. Part of the small ribosomal subunit.

It is found in the mitochondrion. Functionally, one of the primary rRNA binding proteins, it binds directly to the small rRNA where it nucleates assembly of the head domain of the small subunit. The sequence is that of Small ribosomal subunit protein uS7m (RPS7) from Reclinomonas americana.